The following is a 225-amino-acid chain: Putative 5'-nucleotidase alr3139 (225 aa).

A divalent metal cation is bound by residues aspartate 8, aspartate 9, serine 37, and asparagine 88.

The protein belongs to the SurE nucleotidase family. A divalent metal cation is required as a cofactor.

Its subcellular location is the cytoplasm. It carries out the reaction a ribonucleoside 5'-phosphate + H2O = a ribonucleoside + phosphate. Its function is as follows. Nucleotidase that shows phosphatase activity on nucleoside 5'-monophosphates. This Synechocystis sp. (strain ATCC 27184 / PCC 6803 / Kazusa) protein is Putative 5'-nucleotidase alr3139.